A 312-amino-acid chain; its full sequence is Olfactory receptor 7G3 (312 aa).

Topologically, residues 1–25 (MKAGNFSDTPEFFLLGLSGDPELQP) are extracellular. Asn5 is a glycosylation site (N-linked (GlcNAc...) asparagine). The chain crosses the membrane as a helical span at residues 26–46 (ILFMLFLSMYLATMLGNLLII). At 47–54 (LAVNSDSH) the chain is on the cytoplasmic side. A helical membrane pass occupies residues 55–75 (LHTPMYFLLSILSLVDICFTS). Residues 76 to 99 (TTMPKMLVNIQAQAQSINYTGCLT) are Extracellular-facing. A glycan (N-linked (GlcNAc...) asparagine) is linked at Asn93. A disulfide bridge connects residues Cys97 and Cys189. Residues 100-120 (QICFVLVFVGLENGILVMMAY) form a helical membrane-spanning segment. Residues 121-139 (DRFVAICHPLRYNVIMNPK) are Cytoplasmic-facing. A helical membrane pass occupies residues 140 to 160 (LCGLLLLLSFIVSVLDALLHT). Residues 161-197 (LMVLQLTFCIDLEIPHFFCELAHILKLACSDVLINNI) lie on the Extracellular side of the membrane. Residues 198–217 (LVYLVTSLLGVVPLSGIIFS) traverse the membrane as a helical segment. Residues 218–237 (YTRIVSSVMKIPSAGGKYKA) are Cytoplasmic-facing. The chain crosses the membrane as a helical span at residues 238-258 (FSICGSHLIVVSLFYGTGFGV). Residues 259 to 271 (YLSSGATHSSRKG) lie on the Extracellular side of the membrane. The chain crosses the membrane as a helical span at residues 272–292 (AIASVMYTVVTPMLNPLIYSL). Topologically, residues 293–312 (RNKDMLKALRKLISRIPSFH) are cytoplasmic.

The protein belongs to the G-protein coupled receptor 1 family.

Its subcellular location is the cell membrane. In terms of biological role, odorant receptor. The chain is Olfactory receptor 7G3 (OR7G3) from Homo sapiens (Human).